We begin with the raw amino-acid sequence, 313 residues long: Pyrimidine-specific ribonucleoside hydrolase RihB (313 aa).

The active-site Proton acceptor is the D11. Ca(2+) is bound by residues D11, D16, and V124. Q227 and H239 together coordinate substrate. D240 is a Ca(2+) binding site.

This sequence belongs to the IUNH family. RihB subfamily. As to quaternary structure, homotetramer. Ca(2+) is required as a cofactor.

It carries out the reaction a pyrimidine ribonucleoside + H2O = a pyrimidine nucleobase + D-ribose. Hydrolyzes cytidine or uridine to ribose and cytosine or uracil, respectively. Has a clear preference for cytidine over uridine. Strictly specific for ribonucleosides. This is Pyrimidine-specific ribonucleoside hydrolase RihB from Escherichia coli O157:H7.